The sequence spans 430 residues: Lipoyl synthase, mitochondrial (430 aa).

Residues 1 to 37 (MAASTGKLRTLFSAHSSLSARPSSALPALRLTILRSY) constitute a mitochondrion transit peptide. Low complexity predominate over residues 40 to 56 (TTPPDSSISNPSNPSTT). The disordered stretch occupies residues 40 to 64 (TTPPDSSISNPSNPSTTVKRPPTAF). Positions 141, 146, 152, 172, 176, 179, and 387 each coordinate [4Fe-4S] cluster. The Radical SAM core domain maps to 155-376 (GSSKSAATAT…KERALEMGFL (222 aa)).

This sequence belongs to the radical SAM superfamily. Lipoyl synthase family. It depends on [4Fe-4S] cluster as a cofactor.

The protein resides in the mitochondrion. It catalyses the reaction [[Fe-S] cluster scaffold protein carrying a second [4Fe-4S](2+) cluster] + N(6)-octanoyl-L-lysyl-[protein] + 2 oxidized [2Fe-2S]-[ferredoxin] + 2 S-adenosyl-L-methionine + 4 H(+) = [[Fe-S] cluster scaffold protein] + N(6)-[(R)-dihydrolipoyl]-L-lysyl-[protein] + 4 Fe(3+) + 2 hydrogen sulfide + 2 5'-deoxyadenosine + 2 L-methionine + 2 reduced [2Fe-2S]-[ferredoxin]. The protein operates within protein modification; protein lipoylation via endogenous pathway; protein N(6)-(lipoyl)lysine from octanoyl-[acyl-carrier-protein]: step 2/2. Catalyzes the radical-mediated insertion of two sulfur atoms into the C-6 and C-8 positions of the octanoyl moiety bound to the lipoyl domains of lipoate-dependent enzymes, thereby converting the octanoylated domains into lipoylated derivatives. The sequence is that of Lipoyl synthase, mitochondrial from Blastomyces gilchristii (strain SLH14081) (Blastomyces dermatitidis).